The following is a 179-amino-acid chain: DELTA-actitoxin-Afr1c (179 aa).

The N-terminal alpha-helix that contributes to the pore stretch occupies residues 1-29; it reads SAEVAGAIIDGASLTFDVLQTVLKALGDV. The tract at residues 11–30 is N-terminal region; sequence GASLTFDVLQTVLKALGDVS. Arg31 is an an N-(acyl)-sphingosylphosphocholine binding site. N-acetyl-D-glucosamine 6-sulfate is bound by residues Tyr51 and Arg53. The an N-(acyl)-sphingosylphosphocholine site is built by Arg53, Ser54, Arg79, Gly85, Tyr113, Ser114, Trp116, Tyr133, Tyr137, Tyr138, Arg144, and Gly168. Positions 105 to 120 are trp-rich region, which is important for the binding to lipid membrane; the sequence is SIPFDYNLYSNWWNVK. Tyr138 contacts N-acetyl-D-glucosamine 6-sulfate. Positions 144 to 146 match the Cell attachment site, crucial for protein stability motif; that stretch reads RGD.

This sequence belongs to the actinoporin family. Sea anemone subfamily. As to quaternary structure, octamer or nonamer in membranes. Monomer in the soluble state.

It is found in the secreted. The protein resides in the nematocyst. Its subcellular location is the target cell membrane. Its function is as follows. Pore-forming toxin (PFT) that consists of a crown-shaped octamer or nonamer that forms cation-selective hydrophilic pores of about 1.5 nm (inside) and 13 nm (outside) and causes cytolysis. It causes cardiac stimulation. Also causes hemolysis (HC(50)=0.3 nM). Interestingly, the Phe-16 is crucial for hemolysis. Pore formation is a multi-step process that involves specific recognition of membrane sphingomyelin (but neither cholesterol nor phosphatidylcholine) using aromatic rich region and adjacent phosphocholine (POC) binding site, firm binding to the membrane (mainly driven by hydrophobic interactions) accompanied by the transfer of the N-terminal region to the lipid-water interface and finally pore formation after oligomerization of monomers. It is probable that a dimeric form is an assembly intermediate before the complete oligomerization. The formation of stable pores occurs only in vesicles composed of DOPC/SM (there is no oligomerization when the PFT is treated with vesicles of DOPC or SM alone). The transmembrane pore displays 8 lateral perforations, one at each subunit-subunit interface, partially occupied by the acyl-chain region of a bridging lipid. Each pore contains 24 lipid molecules, firmly bound to each subunit, that is, 3 lipids (L1, L2, L3, L4 and/or L5) are associated to each subunit. Lipid L1 bridges 2 subunits, whereas lipids L2 and L3 bind to sites at single subunit. This Actinia fragacea (Strawberry anemone) protein is DELTA-actitoxin-Afr1c.